The following is a 56-amino-acid chain: VPANCLLPMKVGPCRARVPRFYYNSSSGKCEGFTYGGCGANANKFQTKAQCEKACA.

The BPTI/Kunitz inhibitor domain occupies Cys-5 to Cys-55. 3 disulfides stabilise this stretch: Cys-5–Cys-55, Cys-14–Cys-38, and Cys-30–Cys-51.

This sequence belongs to the venom Kunitz-type family. Sea anemone type 2 potassium channel toxin subfamily. Expressed by acrorhagi.

It localises to the secreted. The protein resides in the nematocyst. Serine protease inhibitor that is strongly active against trypsin (900 IU/mg) and moderately active against plasmin. In Anthopleura fuscoviridis (Sea anemone), this protein is PI-actitoxin-Afv2b.